Consider the following 780-residue polypeptide: Protein SAV (780 aa).

Residues 253–260 (GPPGTGKT) and 528–535 (GPPGTGKT) contribute to the ATP site.

Belongs to the AAA ATPase family. CDC48 subfamily.

Functionally, not yet known, shows ATPase activity. The sequence is that of Protein SAV (sav) from Sulfolobus acidocaldarius (strain ATCC 33909 / DSM 639 / JCM 8929 / NBRC 15157 / NCIMB 11770).